Consider the following 355-residue polypeptide: dTDP-D-glucose 4,6-dehydratase (355 aa).

T142 lines the substrate pocket. D143 functions as the Proton donor in the catalytic mechanism. Active-site proton acceptor residues include E144 and Y166.

This sequence belongs to the NAD(P)-dependent epimerase/dehydratase family. dTDP-glucose dehydratase subfamily. NAD(+) serves as cofactor.

The catalysed reaction is dTDP-alpha-D-glucose = dTDP-4-dehydro-6-deoxy-alpha-D-glucose + H2O. The sequence is that of dTDP-D-glucose 4,6-dehydratase (Tgds) from Mus musculus (Mouse).